The sequence spans 207 residues: MPSTGLDKKPDSGATDLAALDTHLIAPPGVARRVFEQLRAPAEGAGFEIVRVRFGVQDGQTLQIMAERPDGSMTVEDCAELSRMLSALLDVEDPIPGEYHLEISSAGIDRPLTRPKDFERWSGFEVKVGLSEPLSGRKRFRGILQGVEDDEVLVECDIEGFSEPQVLGLPFRQLSEAKLVMSDDLIRESLKRQGPVNDDPDAPADGE.

This sequence belongs to the RimP family.

It is found in the cytoplasm. Functionally, required for maturation of 30S ribosomal subunits. This Parvibaculum lavamentivorans (strain DS-1 / DSM 13023 / NCIMB 13966) protein is Ribosome maturation factor RimP.